The following is a 148-amino-acid chain: Phosphopantetheine adenylyltransferase (148 aa).

Belongs to the eukaryotic CoaD family.

The protein localises to the cytoplasm. It catalyses the reaction (R)-4'-phosphopantetheine + ATP + H(+) = 3'-dephospho-CoA + diphosphate. It participates in cofactor biosynthesis; coenzyme A biosynthesis. In terms of biological role, reversibly transfers an adenylyl group from ATP to 4'-phosphopantetheine, yielding dephospho-CoA (dPCoA) and pyrophosphate. This is Phosphopantetheine adenylyltransferase from Archaeoglobus fulgidus (strain ATCC 49558 / DSM 4304 / JCM 9628 / NBRC 100126 / VC-16).